The chain runs to 406 residues: Bifunctional enzyme IspD/IspF (406 aa).

The 2-C-methyl-D-erythritol 4-phosphate cytidylyltransferase stretch occupies residues 1 to 247 (MSLIRVNGEA…AFFFNPAKDT (247 aa)). The tract at residues 248–406 (FIGMGFDTHA…HVSMRYKQKL (159 aa)) is 2-C-methyl-D-erythritol 2,4-cyclodiphosphate synthase. Positions 254 and 256 each coordinate a divalent metal cation. Residues 254–256 (DTH) and 280–281 (HS) each bind 4-CDP-2-C-methyl-D-erythritol 2-phosphate. H288 contributes to the a divalent metal cation binding site. 4-CDP-2-C-methyl-D-erythritol 2-phosphate is bound by residues 302–304 (DIG), 307–311 (FPDND), 378–381 (TTME), F385, and K388.

This sequence in the N-terminal section; belongs to the IspD/TarI cytidylyltransferase family. IspD subfamily. It in the C-terminal section; belongs to the IspF family. A divalent metal cation is required as a cofactor.

The enzyme catalyses 2-C-methyl-D-erythritol 4-phosphate + CTP + H(+) = 4-CDP-2-C-methyl-D-erythritol + diphosphate. The catalysed reaction is 4-CDP-2-C-methyl-D-erythritol 2-phosphate = 2-C-methyl-D-erythritol 2,4-cyclic diphosphate + CMP. It participates in isoprenoid biosynthesis; isopentenyl diphosphate biosynthesis via DXP pathway; isopentenyl diphosphate from 1-deoxy-D-xylulose 5-phosphate: step 2/6. It functions in the pathway isoprenoid biosynthesis; isopentenyl diphosphate biosynthesis via DXP pathway; isopentenyl diphosphate from 1-deoxy-D-xylulose 5-phosphate: step 4/6. In terms of biological role, bifunctional enzyme that catalyzes the formation of 4-diphosphocytidyl-2-C-methyl-D-erythritol from CTP and 2-C-methyl-D-erythritol 4-phosphate (MEP) (IspD), and catalyzes the conversion of 4-diphosphocytidyl-2-C-methyl-D-erythritol 2-phosphate (CDP-ME2P) to 2-C-methyl-D-erythritol 2,4-cyclodiphosphate (ME-CPP) with a corresponding release of cytidine 5-monophosphate (CMP) (IspF). The polypeptide is Bifunctional enzyme IspD/IspF (Helicobacter pylori (strain HPAG1)).